We begin with the raw amino-acid sequence, 938 residues long: MSTMRLLTLALLFSCSVARAACDPKIVNIGAVLSTRKHEQMFREAVNQANKRHGSWKIQLNATSVTHKPNAIQMALSVCEDLISSQVYAILVSHPPTPNDHFTPTPVSYTAGFYRIPVLGLTTRMSIYSDKSIHLSFLRTVPPYSHQSSVWFEMMRVYSWNHIILLVSDDHEGRAAQKRLETLLEERESKAEKVLQFDPGTKNVTALLMEAKELEARVIILSASEDDAATVYRAAAMLNMTGSGYVWLVGEREISGNALRYAPDGILGLQLINGKNESAHISDAVGVVAQAVHELLEKENITDPPRGCVGNTNIWKTGPLFKRVLMSSKYADGVTGRVEFNEDGDRKFANYSIMNLQNRKLVQVGIYNGTHVIPNDRKIIWPGGETEKPRGYQMSTRLKIVTIHQEPFVYVKPTLSDGTCKEEFTVNGDPVKKVICTGPNDTSPGSPRHTVPQCCYGFCIDLLIKLARTMNFTYEVHLVADGKFGTQERVNNSNKKEWNGMMGELLSGQADMIVAPLTINNERAQYIEFSKPFKYQGLTILVKKEIPRSTLDSFMQPFQSTLWLLVGLSVHVVAVMLYLLDRFSPFGRFKVNSEEEEEDALTLSSAMWFSWGVLLNSGIGEGAPRSFSARILGMVWAGFAMIIVASYTANLAAFLVLDRPEERITGINDPRLRNPSDKFIYATVKQSSVDIYFRRQVELSTMYRHMEKHNYESAAEAIQAVRDNKLHAFIWDSAVLEFEASQKCDLVTTGELFFRSGFGIGMRKDSPWKQNVSLSILKSHENGFMEDLDKTWVRYQECDSRSNAPATLTFENMAGVFMLVAGGIVAGIFLIFIEIAYKRHKDARRKQMQLAFAAVNVWRKNLQDRKSGRAEPDPKKKATFRAITSTLASSFKRRRSSKDTSTGGGRGALQNQKDTVLPRRAIEREEGQLQLCSRHRES.

Positions methionine 1–alanine 18 are cleaved as a signal peptide. Over arginine 19–glutamine 559 the chain is Extracellular. N-linked (GlcNAc...) asparagine glycans are attached at residues asparagine 61, asparagine 203, asparagine 239, asparagine 276, asparagine 300, asparagine 350, asparagine 368, asparagine 440, asparagine 471, and asparagine 491. The cysteines at positions 79 and 308 are disulfide-linked. 2 disulfides stabilise this stretch: cysteine 420–cysteine 454 and cysteine 436–cysteine 455. Glycine is bound by residues proline 516, threonine 518, and arginine 523. Residues serine 560–leucine 580 traverse the membrane as a helical segment. Over aspartate 581–serine 604 the chain is Cytoplasmic. Residues leucine 603–proline 624 form a pore-forming region. An intramembrane region (discontinuously helical) is located at residues serine 605–leucine 615. Residues asparagine 616–phenylalanine 627 lie on the Cytoplasmic side of the membrane. The helical transmembrane segment at serine 628 to threonine 648 threads the bilayer. Topologically, residues alanine 649–glutamate 811 are extracellular. Residue asparagine 674 is glycosylated (N-linked (GlcNAc...) asparagine). Glycine contacts are provided by serine 688 and aspartate 732. Cysteine 744 and cysteine 798 form a disulfide bridge. A glycan (N-linked (GlcNAc...) asparagine) is linked at asparagine 771. A helical transmembrane segment spans residues asparagine 812–isoleucine 835. Over alanine 836–serine 938 the chain is Cytoplasmic. 4 positions are modified to phosphoserine; by PKC: serine 889, serine 890, serine 896, and serine 897. The segment at serine 889–serine 938 is disordered. Residues valine 916–glycine 927 are compositionally biased toward basic and acidic residues.

It belongs to the glutamate-gated ion channel (TC 1.A.10.1) family. NR1/GRIN1 subfamily. In terms of assembly, heterotetramer; the NMDAR subunits are modular and harbor tiered domains that function in concert to regulate opening and closing of the cation-selective ion channel pore. Forms heterotetrameric channels composed of two GluN1/zeta subunits (GRIN1), and two identical GluN2/epsilon subunits (GRIN2A, GRIN2B, GRIN2C or GRIN2D) or GluN3 subunits (GRIN3A or GRIN3B) (in vitro). Can also form heterotetrameric channels that contain at least two GluN1 subunits and at least two different GluN2 subunits (or a combination of one GluN2 and one GluN3 subunits) (in vitro). In vivo, the subunit composition may vary in function of the expression levels of the different subunits. Found in a complex with GRIN2A or GRIN2B, GRIN3A and PPP2CB. Found in a complex with GRIN2A or GRIN2B and GRIN3B. Interacts with SNX27 (via PDZ domain); the interaction is required for recycling to the plasma membrane when endocytosed and prevent degradation in lysosomes. Interacts with DLG4 and MPDZ. Interacts with LRFN1 and LRFN2. Interacts with MYZAP. Found in a complex with DLG4 and PRR7. Found in a complex with GRIN2B and PRR7. Interacts with PRR7; the interaction is reduced following NMDA receptor activity. Post-translationally, NMDA is probably regulated by C-terminal phosphorylation of an isoform of GRIN1 by PKC. Dephosphorylated on Ser-897 probably by protein phosphatase 2A (PPP2CB). Its phosphorylated state is influenced by the formation of the NMDAR-PPP2CB complex and the NMDAR channel activity.

The protein resides in the cell membrane. The protein localises to the postsynaptic cell membrane. Its subcellular location is the postsynaptic density membrane. It localises to the synaptic cell membrane. It carries out the reaction Ca(2+)(in) = Ca(2+)(out). The catalysed reaction is Na(+)(in) = Na(+)(out). The enzyme catalyses K(+)(in) = K(+)(out). With respect to regulation, NMDA glutamate receptor activity is inhbited by Mg2(+) in a voltage-dependent manner; Mg2(+)-induced blockade occurs only at negative potentials and decreases with membrane depolarization. 7-chlorokynurenate (50 uM) or Zn2(+) (100 uM) partially inhibit the NMDA glutamate receptor activity, while acide 2-amino-5-phosphonovalerique(100 uM) almost completely blocked the NMDA glutamate receptor activity. Dizocilpine (1 uM) results in long lasting and almost complete block of the NMDA glutamate receptor activity. Component of N-methyl-D-aspartate (NMDA) receptors (NMDARs) that function as heterotetrameric, ligand-gated cation channels with high calcium permeability and voltage-dependent block by Mg(2+). NMDARs participate in synaptic plasticity for learning and memory formation by contributing to the long-term potentiation (LTP). Channel activation requires binding of the neurotransmitter L-glutamate to the GluN2 subunit, glycine or D-serine binding to the GluN1 subunit, plus membrane depolarization to eliminate channel inhibition by Mg(2+). NMDARs mediate simultaneously the potasium efflux and the influx of calcium and sodium. Each GluN2 or GluN3 subunit confers differential attributes to channel properties, including activation, deactivation and desensitization kinetics, pH sensitivity, Ca2(+) permeability, and binding to allosteric modulators. The polypeptide is Glutamate receptor ionotropic, NMDA 1 (Homo sapiens (Human)).